The chain runs to 357 residues: Peptide chain release factor 1 (357 aa).

Glutamine 233 is subject to N5-methylglutamine.

Belongs to the prokaryotic/mitochondrial release factor family. In terms of processing, methylated by PrmC. Methylation increases the termination efficiency of RF1.

The protein resides in the cytoplasm. In terms of biological role, peptide chain release factor 1 directs the termination of translation in response to the peptide chain termination codons UAG and UAA. The sequence is that of Peptide chain release factor 1 from Leuconostoc citreum (strain KM20).